The following is a 718-amino-acid chain: K(+)-insensitive pyrophosphate-energized proton pump (718 aa).

The next 6 membrane-spanning stretches (helical) occupy residues 6–26 (AVLVLVIACGVVSVLFAIWAI), 54–76 (LTRQYSTIAIVGVVVFLAAWYLL), 81–103 (AIGFLIGAVLSGVTGFIGMHVSV), 112–132 (AASLSLAGGLELAFKSGAITG), 133–153 (LLVAGLALLGVSVYYFILTVW), and 168–188 (VSLGFGASLISIFARLGGGIF). K190 lines the substrate pocket. D193, D197, N220, and D223 together coordinate Mg(2+). The next 6 helical transmembrane spans lie at 240–260 (AVTVVATMVLGAIFFNGSDIL), 265–285 (LYPLMICGACVITSIVGTFFV), 300–320 (GLIATGLLSIVGLAIANTLTV), 335–355 (GTNLFLCGLIGLIVTGLIVVI), 385–405 (GLAVSLESTALPAIVIVGGII), and 413–433 (LFGTAIAVTAMLGIAGMIVAL). A Mg(2+)-binding site is contributed by D441. 4 consecutive transmembrane segments (helical) span residues 472–492 (AVTKGYAIGSAGLGALVLFAA), 524–544 (YVVAGLIFGGLIPYLFGGMAM), 593–613 (IIPSLLPVLAPIVVYFGVLLI), and 620–640 (AFAALGASLLGVIVNGLFVAI). Ca(2+) contacts are provided by D650, D682, and D686. Position 689 (K689) interacts with substrate. Residues 695-715 (AVNPAIKITNIVALLLLAVLA) traverse the membrane as a helical segment.

This sequence belongs to the H(+)-translocating pyrophosphatase (TC 3.A.10) family. K(+)-insensitive subfamily. Homodimer. Requires Mg(2+) as cofactor.

Its subcellular location is the cell inner membrane. The catalysed reaction is diphosphate + H2O + H(+)(in) = 2 phosphate + 2 H(+)(out). Proton pump that utilizes the energy of pyrophosphate hydrolysis as the driving force for proton movement across the membrane. Generates a proton motive force. This chain is K(+)-insensitive pyrophosphate-energized proton pump, found in Brucella anthropi (strain ATCC 49188 / DSM 6882 / CCUG 24695 / JCM 21032 / LMG 3331 / NBRC 15819 / NCTC 12168 / Alc 37) (Ochrobactrum anthropi).